We begin with the raw amino-acid sequence, 364 residues long: Dermonecrotic toxin SPH (364 aa).

A signal peptide spans 1–17 (MIRIFALITALAITVKC). Catalysis depends on histidine 29, which acts as the Nucleophile. Mg(2+) contacts are provided by glutamate 49 and aspartate 51. Residue histidine 65 is part of the active site. Disulfide bonds link cysteine 69–cysteine 75 and cysteine 71–cysteine 215. Aspartate 109 is a binding site for Mg(2+).

Belongs to the arthropod phospholipase D family. Mg(2+) is required as a cofactor. Expressed in salivary glands.

It localises to the secreted. The catalysed reaction is an N-(acyl)-sphingosylphosphocholine = an N-(acyl)-sphingosyl-1,3-cyclic phosphate + choline. It catalyses the reaction an N-(acyl)-sphingosylphosphoethanolamine = an N-(acyl)-sphingosyl-1,3-cyclic phosphate + ethanolamine. The enzyme catalyses a 1-acyl-sn-glycero-3-phosphocholine = a 1-acyl-sn-glycero-2,3-cyclic phosphate + choline. It carries out the reaction a 1-acyl-sn-glycero-3-phosphoethanolamine = a 1-acyl-sn-glycero-2,3-cyclic phosphate + ethanolamine. Its function is as follows. Dermonecrotic toxins cleave the phosphodiester linkage between the phosphate and headgroup of certain phospholipids (sphingolipid and lysolipid substrates), forming an alcohol (often choline) and a cyclic phosphate. Acts on sphingomyelin (SM). It may also act on ceramide phosphoethanolamine (CPE), lysophosphatidylcholine (LPC) and lysophosphatidylethanolamine (LPE), but not on lysophosphatidylserine (LPS), and lysophosphatidylglycerol (LPG). It acts by transphosphatidylation, releasing exclusively cyclic phosphate products as second products. Induces dermonecrosis, hemolysis, increased vascular permeability, edema, inflammatory response, and platelet aggregation. The sequence is that of Dermonecrotic toxin SPH (SPH) from Ixodes scapularis (Black-legged tick).